Reading from the N-terminus, the 424-residue chain is Hemagglutinin-esterase (424 aa).

A signal peptide spans 1-16; sequence MFLLPRFVLVSCIIGS. Positions 7–127 are esterase domain 1; that stretch reads FVLVSCIIGS…SNDIWMQNKG (121 aa). Residues 17–392 lie on the Virion surface side of the membrane; sequence LGFDNPPTNV…PICVYDPLPI (376 aa). The Nucleophile role is filled by Ser40. Cys44 and Cys65 are disulfide-bonded. 5 N-linked (GlcNAc...) asparagine; by host glycosylation sites follow: Asn54, Asn89, Asn153, Asn236, and Asn301. 3 cysteine pairs are disulfide-bonded: Cys113–Cys162, Cys197–Cys276, and Cys205–Cys249. The interval 128–266 is receptor binding; that stretch reads LFYTQVYKNM…GNYLAISNEL (139 aa). Residues 267–379 are esterase domain 2; sequence LLTVPTKAIC…RCPTAADINT (113 aa). A disulfide bond links Cys307 and Cys312. A glycan (N-linked (GlcNAc...) asparagine; by host) is linked at Asn316. Catalysis depends on charge relay system residues Asp326 and His329. An intrachain disulfide couples Cys347 to Cys371. The N-linked (GlcNAc...) asparagine; by host glycan is linked to Asn358. The helical transmembrane segment at 393–413 threads the bilayer; that stretch reads ILLGILLGVAVIIIVVLLLYF. At 414–424 the chain is on the intravirion side; sequence MVDNGTRLHDA. Residue Asn417 is glycosylated (N-linked (GlcNAc...) asparagine; by host).

This sequence belongs to the influenza type C/coronaviruses hemagglutinin-esterase family. In terms of assembly, homodimer; disulfide-linked. Forms a complex with the M protein in the pre-Golgi. Associates then with S-M complex to form a ternary complex S-M-HE. N-glycosylated in the RER. Post-translationally, N-glycosylated in the host RER.

It localises to the virion membrane. The protein resides in the host cell membrane. It carries out the reaction N-acetyl-9-O-acetylneuraminate + H2O = N-acetylneuraminate + acetate + H(+). It catalyses the reaction N-acetyl-4-O-acetylneuraminate + H2O = N-acetylneuraminate + acetate + H(+). In terms of biological role, structural protein that makes short spikes at the surface of the virus. Contains receptor binding and receptor-destroying activities. Mediates de-O-acetylation of N-acetyl-4-O-acetylneuraminic acid, which is probably the receptor determinant recognized by the virus on the surface of erythrocytes and susceptible cells. This receptor-destroying activity is important for virus release as it probably helps preventing self-aggregation and ensures the efficient spread of the progeny virus from cell to cell. May serve as a secondary viral attachment protein for initiating infection, the spike protein being the major one. May become a target for both the humoral and the cellular branches of the immune system. The chain is Hemagglutinin-esterase from Bovine coronavirus (strain 98TXSF-110-ENT) (BCoV-ENT).